Reading from the N-terminus, the 402-residue chain is NADH-quinone oxidoreductase subunit D (402 aa).

Belongs to the complex I 49 kDa subunit family. In terms of assembly, NDH-1 is composed of 14 different subunits. Subunits NuoB, C, D, E, F, and G constitute the peripheral sector of the complex.

Its subcellular location is the cell inner membrane. It catalyses the reaction a quinone + NADH + 5 H(+)(in) = a quinol + NAD(+) + 4 H(+)(out). NDH-1 shuttles electrons from NADH, via FMN and iron-sulfur (Fe-S) centers, to quinones in the respiratory chain. The immediate electron acceptor for the enzyme in this species is believed to be ubiquinone. Couples the redox reaction to proton translocation (for every two electrons transferred, four hydrogen ions are translocated across the cytoplasmic membrane), and thus conserves the redox energy in a proton gradient. In Maricaulis maris (strain MCS10) (Caulobacter maris), this protein is NADH-quinone oxidoreductase subunit D.